The following is a 39-amino-acid chain: Potassium channel toxin alpha-KTx 2.5 (39 aa).

Intrachain disulfides connect Cys-7–Cys-29, Cys-13–Cys-34, and Cys-17–Cys-36.

This sequence belongs to the short scorpion toxin superfamily. Potassium channel inhibitor family. Alpha-KTx 02 subfamily. As to expression, expressed by the venom gland.

Its subcellular location is the secreted. Functionally, potent selective inhibitor of Kv1.1/KCNA1, Kv1.2/KCNA2, Kv1.3/KCNA3 voltage-gated potassium channels. Weak inhibitor of Kv1.6/KCNA6 potassium channel. It also shows a weak interaction with nicotinic acetylcholine receptors (nAChR), suggesting it may weakly inhibit it. The protein is Potassium channel toxin alpha-KTx 2.5 of Centruroides limbatus (Bark scorpion).